The primary structure comprises 336 residues: Fructose-1,6-bisphosphatase class 1 (336 aa).

Positions 90, 112, 114, and 115 each coordinate Mg(2+). Residues 115–118 (DGSS), Asn-211, and Lys-277 contribute to the substrate site. Glu-283 lines the Mg(2+) pocket.

The protein belongs to the FBPase class 1 family. Homotetramer. Requires Mg(2+) as cofactor.

The protein resides in the cytoplasm. The enzyme catalyses beta-D-fructose 1,6-bisphosphate + H2O = beta-D-fructose 6-phosphate + phosphate. Its pathway is carbohydrate biosynthesis; gluconeogenesis. In Pseudomonas aeruginosa (strain ATCC 15692 / DSM 22644 / CIP 104116 / JCM 14847 / LMG 12228 / 1C / PRS 101 / PAO1), this protein is Fructose-1,6-bisphosphatase class 1.